Here is a 188-residue protein sequence, read N- to C-terminus: MLVIAGLGNPGKTYENTRHNVGFMAIDELSKEWNIELNKTKFNGLYGMGFVSGKKVLLVKPLTYMNLSGECLRPILDYYDADHEDLKVIYDDLDLPTGKIRLRTKGSAGGHNGIKSLIQHLGTPEFDRVRIGIGRPVNGMKVVDYVLGAFTKEEAPHINDAVSKTVKACEASLTKPFLEVMNEFNANV.

A tRNA-binding site is contributed by Y14. The active-site Proton acceptor is H19. Positions 64, 66, and 112 each coordinate tRNA.

It belongs to the PTH family. As to quaternary structure, monomer.

Its subcellular location is the cytoplasm. It carries out the reaction an N-acyl-L-alpha-aminoacyl-tRNA + H2O = an N-acyl-L-amino acid + a tRNA + H(+). In terms of biological role, hydrolyzes ribosome-free peptidyl-tRNAs (with 1 or more amino acids incorporated), which drop off the ribosome during protein synthesis, or as a result of ribosome stalling. Its function is as follows. Catalyzes the release of premature peptidyl moieties from peptidyl-tRNA molecules trapped in stalled 50S ribosomal subunits, and thus maintains levels of free tRNAs and 50S ribosomes. In Bacillus velezensis (strain DSM 23117 / BGSC 10A6 / LMG 26770 / FZB42) (Bacillus amyloliquefaciens subsp. plantarum), this protein is Peptidyl-tRNA hydrolase.